The sequence spans 839 residues: Taste receptor type 1 member 2 (839 aa).

Positions 1–19 (MGPRAKTISSLFFLLWVLA) are cleaved as a signal peptide. At 20-566 (EPAENSDFYL…VFLEWHEAPT (547 aa)) the chain is on the extracellular side. N-linked (GlcNAc...) asparagine glycosylation is found at asparagine 84, asparagine 248, asparagine 292, asparagine 312, asparagine 368, asparagine 428, asparagine 487, and asparagine 527. A helical membrane pass occupies residues 567-587 (IAVALLAALGFLSTLAILVIF). Topologically, residues 588–602 (WRHFQTPIVRSAGGP) are cytoplasmic. The chain crosses the membrane as a helical span at residues 603–623 (MCFLMLTLLLVAYMVVPVYVG). Topologically, residues 624–635 (PPKVSTCLCRQA) are extracellular. Residues 636-656 (LFPLCFTICISCIAVRSFQIV) traverse the membrane as a helical segment. The Cytoplasmic segment spans residues 657–681 (CAFKMASRFPRAYSYWVRYQGPYVS). The chain crosses the membrane as a helical span at residues 682–702 (MAFITVLKMVIVVIGMLATGL). The Extracellular portion of the chain corresponds to 703–727 (SPTTRTDPDDPKITIVSCNPNYRNS). The chain crosses the membrane as a helical span at residues 728–748 (LLFNTSLDLLLSVVGFSFAYM). Residues 749-760 (GKELPTNYNEAK) are Cytoplasmic-facing. The chain crosses the membrane as a helical span at residues 761–781 (FITLSMTFYFTSSVSLCTFMS). The Extracellular segment spans residues 782 to 784 (AYS). Residues 785–805 (GVLVTIVDLLVTVLNLLAISL) traverse the membrane as a helical segment. Residues 806–839 (GYFGPKCYMILFYPERNTPAYFNSMIQGYTMRRD) lie on the Cytoplasmic side of the membrane.

The protein belongs to the G-protein coupled receptor 3 family. TAS1R subfamily. Forms heterodimers with TAS1R3.

It localises to the cell membrane. Functionally, putative taste receptor. TAS1R2/TAS1R3 recognizes diverse natural and synthetic sweeteners. This Homo sapiens (Human) protein is Taste receptor type 1 member 2 (TAS1R2).